The sequence spans 120 residues: Ribonuclease P protein component (120 aa).

Belongs to the RnpA family. Consists of a catalytic RNA component (M1 or rnpB) and a protein subunit.

It catalyses the reaction Endonucleolytic cleavage of RNA, removing 5'-extranucleotides from tRNA precursor.. Its function is as follows. RNaseP catalyzes the removal of the 5'-leader sequence from pre-tRNA to produce the mature 5'-terminus. It can also cleave other RNA substrates such as 4.5S RNA. The protein component plays an auxiliary but essential role in vivo by binding to the 5'-leader sequence and broadening the substrate specificity of the ribozyme. This is Ribonuclease P protein component from Chlamydia trachomatis serovar L2 (strain ATCC VR-902B / DSM 19102 / 434/Bu).